A 1290-amino-acid chain; its full sequence is 1-phosphatidylinositol 4,5-bisphosphate phosphodiesterase gamma-1 (1290 aa).

Ala2 bears the N-acetylalanine mark. One can recognise a PH 1 domain in the interval 27–142; it reads RSLEVGTVMT…WIKGLTWLME (116 aa). The 36-residue stretch at 152–187 folds into the EF-hand domain; sequence QIERWLRKQFYSVDRNREDRISAKDLKNMLSQVNYR. Positions 165, 167, 169, 171, and 176 each coordinate Ca(2+). The 145-residue stretch at 320 to 464 folds into the PI-PLC X-box domain; sequence ETMNNPLSHY…LKRKILIKHK (145 aa). Catalysis depends on residues His335 and His380. One can recognise a PH 2; first part domain in the interval 489-523; that stretch reads SIKNGILYLEDPVNHEWYPHYFVLTSSKIYYSEET. The residue at position 506 (Tyr506) is a Phosphotyrosine. Positions 522-546 are disordered; that stretch reads ETSSDQGNEDEEEPKEASGSTELHS. SH2 domains lie at 550 to 657 and 668 to 756; these read WFHG…SEPV and WYHA…RYPI. The residue at position 771 (Tyr771) is a Phosphotyrosine; by SYK. Phosphotyrosine is present on Tyr775. A Phosphotyrosine; by ITK, SYK and TXK modification is found at Tyr783. In terms of domain architecture, SH3 spans 791 to 851; the sequence is TFKCAVKALF…PSNYVEEMIN (61 aa). Residues 895–931 form the PH 2; second part domain; sequence FVFSISMPSVAQWSLDVAADSQEELQDWVKKIREVAQ. The region spanning 953-1070 is the PI-PLC Y-box domain; the sequence is LSELVVYCRP…GYVLQPSTMR (118 aa). Tyr977 is modified (phosphotyrosine). The 124-residue stretch at 1071-1194 folds into the C2 domain; the sequence is DEAFDPFDKS…TGYRAVPLKN (124 aa). Phosphoserine is present on residues Ser1221, Ser1227, Ser1233, and Ser1248. Tyr1253 bears the Phosphotyrosine mark. At Ser1263 the chain carries Phosphoserine. The tract at residues 1271 to 1290 is disordered; the sequence is FDSRERRAPRRTRVNGDNRL.

As to quaternary structure, interacts with AGAP2 via its SH3 domain. Interacts (via SH2 domain) with RET. Interacts with FLT1 (tyrosine-phosphorylated). Interacts (via SH2 domain) with FGFR1, FGFR2, FGFR3 and FGFR4 (phosphorylated). Interacts with LAT (phosphorylated) upon TCR activation. Interacts (via SH3 domain) with the Pro-rich domain of TNK1. Associates with BLNK, VAV1, GRB2 and NCK1 in a B-cell antigen receptor-dependent fashion. Interacts with CBLB in activated T-cells; which inhibits phosphorylation. Interacts with SHB. Interacts (via SH3 domain) with the Arg/Gly-rich-flanked Pro-rich domains of KHDRBS1/SAM68. This interaction is selectively regulated by arginine methylation of KHDRBS1/SAM68. Interacts with INPP5D/SHIP1, THEMIS and CLNK. Interacts with AXL, FLT4 and KIT. Interacts with RALGPS1. Interacts (via the SH2 domains) with VIL1 (phosphorylated at C-terminus tyrosine phosphorylation sites). Interacts (via SH2 domain) with PDGFRA and PDGFRB (tyrosine phosphorylated). Interacts with PIP5K1C. Interacts with NTRK1 and NTRK2 (phosphorylated upon ligand-binding). Interacts with SYK; activates PLCG1. Interacts with GRB2, LAT and THEMIS upon TCR activation in thymocytes. Interacts with TESPA1; the association is increased with prolonged stimulation of the TCR and may facilitate the assembly of the LAT signalosome. Interacts (via C-terminal proline-rich domain (PRD)) with PLCG1 (via SH3 domain); this interaction leads to guanine nucleotide exchange from PlCG1 to DNM1 and enhances DNM1-dependent endocytosis. The cofactor is Ca(2+). In terms of processing, ubiquitinated by CBLB in activated T-cells. Tyrosine phosphorylated in response to signaling via activated FLT3, KIT and PDGFRA. Tyrosine phosphorylated by activated FGFR1, FGFR2, FGFR3 and FGFR4. Tyrosine phosphorylated by activated FLT1 and KDR. Tyrosine phosphorylated by activated PDGFRB. The receptor-mediated activation of PLCG1 involves its phosphorylation by tyrosine kinases, in response to ligation of a variety of growth factor receptors and immune system receptors. For instance, SYK phosphorylates and activates PLCG1 in response to ligation of the B-cell receptor. May be dephosphorylated by PTPRJ. Phosphorylated by ITK and TXK on Tyr-783 upon TCR activation in T-cells.

It localises to the cell projection. It is found in the lamellipodium. The protein resides in the ruffle. The catalysed reaction is a 1,2-diacyl-sn-glycero-3-phospho-(1D-myo-inositol-4,5-bisphosphate) + H2O = 1D-myo-inositol 1,4,5-trisphosphate + a 1,2-diacyl-sn-glycerol + H(+). It carries out the reaction a 1,2-diacyl-sn-glycero-3-phospho-(1D-myo-inositol) + H2O = 1D-myo-inositol 1-phosphate + a 1,2-diacyl-sn-glycerol + H(+). With respect to regulation, activated by phosphorylation on tyrosine residues. Its function is as follows. Mediates the production of the second messenger molecules diacylglycerol (DAG) and inositol 1,4,5-trisphosphate (IP3). Plays an important role in the regulation of intracellular signaling cascades. Becomes activated in response to ligand-mediated activation of receptor-type tyrosine kinases, such as PDGFRA, PDGFRB, EGFR, FGFR1, FGFR2, FGFR3 and FGFR4. Plays a role in actin reorganization and cell migration. Guanine nucleotide exchange factor that binds the GTPase DNM1 and catalyzes the dissociation of GDP, allowing a GTP molecule to bind in its place, therefore enhancing DNM1-dependent endocytosis. The sequence is that of 1-phosphatidylinositol 4,5-bisphosphate phosphodiesterase gamma-1 from Rattus norvegicus (Rat).